Reading from the N-terminus, the 428-residue chain is MILMNNPGDKEVLRLLKQRMESVSQVEETVKEIIRRVKEEGDRALEEFLKRFEKHPVGIENLRVTEKEISEAQVEEEFVETIKIVIEDLKEFHRRQEERSFFFTTKGGSFLGEMVVPLESVGIYVPGGKVPYFSTLLMCAVPAIVAGVERIAVTTPPNENGGISPYILKTCEILGLKEIYRMGGAHAVAALTYGTETVKPVDKIVGPGGVFVTLAKKHVYGDVGIDSIAGPSEIAIVTDGSADLDLIAADFLSQAEHDENAMSVVITTSKEVFEKLPQVIERHLEALPEERRKTARISTENFGTIILTDSLKRAFEISNLIAPEHLEVLVENPFEPLGHIKNAGSVFLGKYTCESVGDYGAGPNHVLPTFRSARFSSGLRVSDFTKKIFITHLSEEDFRRKSELYSKMARWEGFEAHARAIDVRREKL.

Substrate-binding residues include Ser232, Gln254, and His257. Zn(2+)-binding residues include Gln254 and His257. Catalysis depends on proton acceptor residues Glu324 and His325. Substrate contacts are provided by His325, Asp358, Glu412, and His417. Asp358 lines the Zn(2+) pocket. Position 417 (His417) interacts with Zn(2+).

This sequence belongs to the histidinol dehydrogenase family. The cofactor is Zn(2+).

The catalysed reaction is L-histidinol + 2 NAD(+) + H2O = L-histidine + 2 NADH + 3 H(+). Its pathway is amino-acid biosynthesis; L-histidine biosynthesis; L-histidine from 5-phospho-alpha-D-ribose 1-diphosphate: step 9/9. Its function is as follows. Catalyzes the sequential NAD-dependent oxidations of L-histidinol to L-histidinaldehyde and then to L-histidine. The polypeptide is Histidinol dehydrogenase (Thermotoga maritima (strain ATCC 43589 / DSM 3109 / JCM 10099 / NBRC 100826 / MSB8)).